A 215-amino-acid chain; its full sequence is Adenylate kinase (215 aa).

10–15 (GAGKGT) lines the ATP pocket. An NMP region spans residues 30 to 59 (STGDMFRAAMKNNTELGRKAKSFMDNGDLV). Residues T31, R36, 57-59 (DLV), 85-88 (GFPR), and Q92 contribute to the AMP site. The interval 126-163 (GRWICRTCGKTYHEIYNPPKVAGKCDLDGGELYQRDDD) is LID. ATP is bound at residue R127. Zn(2+) contacts are provided by C130 and C133. 136 to 137 (TY) contacts ATP. C150 and D153 together coordinate Zn(2+). 2 residues coordinate AMP: R160 and R171. Q199 provides a ligand contact to ATP.

This sequence belongs to the adenylate kinase family. As to quaternary structure, monomer.

The protein localises to the cytoplasm. The enzyme catalyses AMP + ATP = 2 ADP. Its pathway is purine metabolism; AMP biosynthesis via salvage pathway; AMP from ADP: step 1/1. Catalyzes the reversible transfer of the terminal phosphate group between ATP and AMP. Plays an important role in cellular energy homeostasis and in adenine nucleotide metabolism. The polypeptide is Adenylate kinase (Listeria monocytogenes serotype 4a (strain HCC23)).